A 222-amino-acid polypeptide reads, in one-letter code: Germin-like protein subfamily 1 member 13 (222 aa).

A signal peptide spans 1-18 (MRVSKSLILITLSALVIS). A disulfide bridge connects residues Cys-32 and Cys-49. The region spanning 63 to 214 (SGLNQAGSTN…AFQLDVNIVE (152 aa)) is the Cupin type-1 domain. N-linked (GlcNAc...) asparagine glycosylation occurs at Asn-78. His-111, His-113, Glu-118, and His-160 together coordinate Mn(2+).

It belongs to the germin family. Oligomer (believed to be a pentamer but probably hexamer).

Its subcellular location is the secreted. The protein resides in the extracellular space. It localises to the apoplast. Its function is as follows. May play a role in plant defense. Probably has no oxalate oxidase activity even if the active site is conserved. The chain is Germin-like protein subfamily 1 member 13 (GLP6) from Arabidopsis thaliana (Mouse-ear cress).